A 476-amino-acid chain; its full sequence is MAVPFVEDWDLVQTLGEGAYGEVQLAVNRVTEEAVAVKIVDMKRAVDCPENIKKEICINKMLNHENVVKFYGHRREGNIQYLFLEYCSGGELFDRIEPDIGMPEPDAQRFFHQLMAGVVYLHGIGITHRDIKPENLLLDERDNLKISDFGLATVFRYNNRERLLNKMCGTLPYVAPELLKRREFHAEPVDVWSCGIVLTAMLAGELPWDQPSDSCQEYSDWKEKKTYLNPWKKIDSAPLALLHKILVENPSARITIPDIKKDRWYNKPLKKGAKRPRVTSGGVSESPSGFSKHIQSNLDFSPVNSASSEENVKYSSSQPEPRTGLSLWDTSPSYIDKLVQGISFSQPTCPDHMLLNSQLLGTPGSSQNPWQRLVKRMTRFFTKLDADKSYQCLKETCEKLGYQWKKSCMNQVTISTTDRRNNKLIFKVNLLEMDDKILVDFRLSKGDGLEFKRHFLKIKGKLIDIVSSQKIWLPAT.

Residues 1-265 (MAVPFVEDWD…IPDIKKDRWY (265 aa)) are interaction with CLSPN. A Protein kinase domain is found at 9–265 (WDLVQTLGEG…IPDIKKDRWY (257 aa)). ATP contacts are provided by residues 15-23 (LGEGAYGEV) and Lys38. Residue Asp130 is the Proton acceptor of the active site. Lys132 is covalently cross-linked (Glycyl lysine isopeptide (Lys-Gly) (interchain with G-Cter in ubiquitin)). The segment at 270 to 327 (KKGAKRPRVTSGGVSESPSGFSKHIQSNLDFSPVNSASSEENVKYSSSQPEPRTGLSL) is disordered. Phosphoserine occurs at positions 280, 286, 296, and 301. Positions 281 to 320 (GGVSESPSGFSKHIQSNLDFSPVNSASSEENVKYSSSQPE) are enriched in polar residues. The residue at position 317 (Ser317) is a Phosphoserine; by ATM and ATR. Ser331 is modified (phosphoserine). Position 345 is a phosphoserine; by ATM and ATR (Ser345). Positions 391-476 (QCLKETCEKL…SSQKIWLPAT (86 aa)) are autoinhibitory region. Lys436 participates in a covalent cross-link: Glycyl lysine isopeptide (Lys-Gly) (interchain with G-Cter in ubiquitin). Residues Ser467 and Ser468 each carry the phosphoserine modification.

Belongs to the protein kinase superfamily. CAMK Ser/Thr protein kinase family. NIM1 subfamily. As to quaternary structure, interacts (phosphorylated by ATR) with RAD51. Interacts with and phosphorylates CLSPN, an adapter protein that regulates the ATR-dependent phosphorylation of CHEK1. Interacts with BRCA1. Interacts with and phosphorylates CDC25A, CDC25B and CDC25C. Interacts with FBXO6, which regulates CHEK1. Interacts with PPM1D, which regulates CHEK1 through dephosphorylation. Interacts with TIMELESS; DNA damage-dependent. Interacts with FEM1B; activates CHEK1 in response to stress. Interacts with TLK1. Interacts with XPO1 and YWHAZ. Interacts with CDK5RAP3; antagonizes CHEK1. In terms of assembly, isoform 1 associates with isoform 2, the interaction is disrupted upon phosphorylation by ATR. In terms of processing, phosphorylated by ATR in a RAD17-dependent manner in response to ultraviolet irradiation and inhibition of DNA replication. Phosphorylated by ATM in response to ionizing irradiation. ATM and ATR can both phosphorylate Ser-317 and Ser-345 and this results in enhanced kinase activity. Phosphorylation at Ser-345 induces a change in the conformation of the protein, activates the kinase activity and is a prerequisite for interaction with FBXO6 and subsequent ubiquitination at Lys-436. Phosphorylation at Ser-345 also increases binding to 14-3-3 proteins and promotes nuclear retention. Conversely, dephosphorylation at Ser-345 by PPM1D may contribute to exit from checkpoint mediated cell cycle arrest. Phosphorylation at Ser-280 by AKT1/PKB, may promote mono and/or diubiquitination. Also phosphorylated at undefined residues during mitotic arrest, resulting in decreased activity. Post-translationally, ubiquitinated. Mono or diubiquitination promotes nuclear exclusion. The activated form (phosphorylated on Ser-345) is polyubiquitinated at Lys-436 by some SCF-type E3 ubiquitin ligase complex containing FBXO6 promoting its degradation. Ubiquitination and degradation are required to terminate the checkpoint and ensure that activated CHEK1 does not accumulate as cells progress through S phase, when replication forks encounter transient impediments during normal DNA replication. 'Lys-63'-mediated ubiquitination by TRAF4 at Lys-132 activates cell cycle arrest and activation of DNA repair. Proteolytically cleaved at the C-terminus by SPRTN during normal DNA replication, thereby promoting CHEK1 removal from chromatin and activating the protein kinase activity. In terms of tissue distribution, expressed ubiquitously with the most abundant expression in thymus, testis, small intestine and colon.

It localises to the nucleus. It is found in the chromosome. Its subcellular location is the cytoplasm. The protein localises to the cytoskeleton. The protein resides in the microtubule organizing center. It localises to the centrosome. It catalyses the reaction L-seryl-[protein] + ATP = O-phospho-L-seryl-[protein] + ADP + H(+). The catalysed reaction is L-threonyl-[protein] + ATP = O-phospho-L-threonyl-[protein] + ADP + H(+). Activated through phosphorylation predominantly by ATR but also by ATM in response to DNA damage or inhibition of DNA replication. Activation is modulated by several mediators including CLSPN, BRCA1 and FEM1B. Proteolytic cleavage at the C-terminus by SPRTN during normal DNA replication activates the protein kinase activity. Serine/threonine-protein kinase which is required for checkpoint-mediated cell cycle arrest and activation of DNA repair in response to the presence of DNA damage or unreplicated DNA. May also negatively regulate cell cycle progression during unperturbed cell cycles. This regulation is achieved by a number of mechanisms that together help to preserve the integrity of the genome. Recognizes the substrate consensus sequence [R-X-X-S/T]. Binds to and phosphorylates CDC25A, CDC25B and CDC25C. Phosphorylation of CDC25A at 'Ser-178' and 'Thr-507' and phosphorylation of CDC25C at 'Ser-216' creates binding sites for 14-3-3 proteins which inhibit CDC25A and CDC25C. Phosphorylation of CDC25A at 'Ser-76', 'Ser-124', 'Ser-178', 'Ser-279' and 'Ser-293' promotes proteolysis of CDC25A. Phosphorylation of CDC25A at 'Ser-76' primes the protein for subsequent phosphorylation at 'Ser-79', 'Ser-82' and 'Ser-88' by NEK11, which is required for polyubiquitination and degradation of CDCD25A. Inhibition of CDC25 leads to increased inhibitory tyrosine phosphorylation of CDK-cyclin complexes and blocks cell cycle progression. Also phosphorylates NEK6. Binds to and phosphorylates RAD51 at 'Thr-309', which promotes the release of RAD51 from BRCA2 and enhances the association of RAD51 with chromatin, thereby promoting DNA repair by homologous recombination. Phosphorylates multiple sites within the C-terminus of TP53, which promotes activation of TP53 by acetylation and promotes cell cycle arrest and suppression of cellular proliferation. Also promotes repair of DNA cross-links through phosphorylation of FANCE. Binds to and phosphorylates TLK1 at 'Ser-743', which prevents the TLK1-dependent phosphorylation of the chromatin assembly factor ASF1A. This may enhance chromatin assembly both in the presence or absence of DNA damage. May also play a role in replication fork maintenance through regulation of PCNA. May regulate the transcription of genes that regulate cell-cycle progression through the phosphorylation of histones. Phosphorylates histone H3.1 (to form H3T11ph), which leads to epigenetic inhibition of a subset of genes. May also phosphorylate RB1 to promote its interaction with the E2F family of transcription factors and subsequent cell cycle arrest. Phosphorylates SPRTN, promoting SPRTN recruitment to chromatin. Reduces replication stress and activates the G2/M checkpoint, by phosphorylating and inactivating PABIR1/FAM122A and promoting the serine/threonine-protein phosphatase 2A-mediated dephosphorylation and stabilization of WEE1 levels and activity. Its function is as follows. Endogenous repressor of isoform 1, interacts with, and antagonizes CHK1 to promote the S to G2/M phase transition. The protein is Serine/threonine-protein kinase Chk1 (CHEK1) of Homo sapiens (Human).